Reading from the N-terminus, the 289-residue chain is Glucosamine-6-phosphate deaminase 1 (289 aa).

Lys-64 carries the N6-acetyllysine modification. Asp-72 serves as the catalytic Proton acceptor; for enolization step. Asp-141 (for ring-opening step) is an active-site residue. His-143 acts as the Proton acceptor; for ring-opening step in catalysis. Glu-148 serves as the catalytic For ring-opening step. Thr-161 bears the Phosphothreonine mark.

It belongs to the glucosamine/galactosamine-6-phosphate isomerase family. Homohexamer.

The protein localises to the cytoplasm. It catalyses the reaction alpha-D-glucosamine 6-phosphate + H2O = beta-D-fructose 6-phosphate + NH4(+). It participates in nucleotide-sugar biosynthesis; UDP-N-acetyl-alpha-D-glucosamine biosynthesis; alpha-D-glucosamine 6-phosphate from D-fructose 6-phosphate: step 1/1. With respect to regulation, allosterically activated by N-acetylglucosamine-6-phosphate (GlcNAc6P). Catalyzes the reversible conversion of alpha-D-glucosamine 6-phosphate (GlcN-6P) into beta-D-fructose 6-phosphate (Fru-6P) and ammonium ion, a regulatory reaction step in de novo uridine diphosphate-N-acetyl-alpha-D-glucosamine (UDP-GlcNAc) biosynthesis via hexosamine pathway. Deamination is coupled to aldo-keto isomerization mediating the metabolic flux from UDP-GlcNAc toward Fru-6P. At high ammonium level can drive amination and isomerization of Fru-6P toward hexosamines and UDP-GlcNAc synthesis. Has a role in fine tuning the metabolic fluctuations of cytosolic UDP-GlcNAc and their effects on hyaluronan synthesis that occur during tissue remodeling. Seems to trigger calcium oscillations in mammalian eggs. These oscillations serve as the essential trigger for egg activation and early development of the embryo. This Bos taurus (Bovine) protein is Glucosamine-6-phosphate deaminase 1.